The chain runs to 473 residues: Flagellum-specific ATP synthase (473 aa).

187-194 (AGSGVGKS) is an ATP binding site.

It belongs to the ATPase alpha/beta chains family.

Its subcellular location is the cytoplasm. The enzyme catalyses ATP + H2O + 4 H(+)(in) = ADP + phosphate + 5 H(+)(out). Its function is as follows. Probable catalytic subunit of a protein translocase for flagellum-specific export, or a proton translocase involved in local circuits at the flagellum. The sequence is that of Flagellum-specific ATP synthase (fliI) from Agrobacterium fabrum (strain C58 / ATCC 33970) (Agrobacterium tumefaciens (strain C58)).